A 255-amino-acid chain; its full sequence is Type III pantothenate kinase (255 aa).

6–13 (DVGNTNTV) lines the ATP pocket. Substrate contacts are provided by residues Tyr100 and 107–110 (GADR). Asp109 acts as the Proton acceptor in catalysis. Residue Asp129 participates in K(+) binding. Thr132 is a binding site for ATP. Substrate is bound at residue Thr184.

It belongs to the type III pantothenate kinase family. As to quaternary structure, homodimer. NH4(+) is required as a cofactor. Requires K(+) as cofactor.

The protein resides in the cytoplasm. The catalysed reaction is (R)-pantothenate + ATP = (R)-4'-phosphopantothenate + ADP + H(+). Its pathway is cofactor biosynthesis; coenzyme A biosynthesis; CoA from (R)-pantothenate: step 1/5. Its function is as follows. Catalyzes the phosphorylation of pantothenate (Pan), the first step in CoA biosynthesis. This Syntrophotalea carbinolica (strain DSM 2380 / NBRC 103641 / GraBd1) (Pelobacter carbinolicus) protein is Type III pantothenate kinase.